We begin with the raw amino-acid sequence, 535 residues long: Alpha-1,3-mannosyl-glycoprotein 4-beta-N-acetylglucosaminyltransferase A (535 aa).

At 1–6 (MRLRNG) the chain is on the cytoplasmic side. A helical; Signal-anchor for type II membrane protein membrane pass occupies residues 7–27 (TVATVLAFITSFLTLSWYTTW). Residues 28–535 (QNGKEKVIAY…NEIHIKKVTN (508 aa)) are Lumenal-facing. Positions 31–57 (KEKVIAYQREFLALKERLRIAEHRISQ) form a coiled coil. Asparagine 77 and asparagine 458 each carry an N-linked (GlcNAc...) asparagine glycan. Phosphoserine is present on serine 474.

The protein belongs to the glycosyltransferase 54 family. A divalent metal cation serves as cofactor. Post-translationally, N-glycosylated. As to expression, highly expressed in small intestine, kidney, lung and spleen. Weakly expressed in brain, heart and liver.

Its subcellular location is the golgi apparatus membrane. The protein resides in the secreted. It catalyses the reaction N(4)-{beta-D-GlcNAc-(1-&gt;2)-alpha-D-Man-(1-&gt;3)-[beta-D-GlcNAc-(1-&gt;2)-alpha-D-Man-(1-&gt;6)]-beta-D-Man-(1-&gt;4)-beta-D-GlcNAc-(1-&gt;4)-beta-D-GlcNAc}-L-asparaginyl-[protein] + UDP-N-acetyl-alpha-D-glucosamine = N(4)-{beta-D-GlcNAc-(1-&gt;2)-[beta-D-GlcNAc-(1-&gt;4)]-alpha-D-Man-(1-&gt;3)-[beta-D-GlcNAc-(1-&gt;2)-alpha-D-Man-(1-&gt;6)]-beta-D-Man-(1-&gt;4)-beta-D-GlcNAc-(1-&gt;4)-beta-D-GlcNAc}-L-asparaginyl-[protein] + UDP + H(+). The enzyme catalyses an N(4)-{beta-D-GlcNAc-(1-&gt;2)-alpha-D-Man-(1-&gt;3)-[alpha-D-Man-(1-&gt;6)]-beta-D-Man-(1-&gt;4)-beta-D-GlcNAc-(1-&gt;4)-beta-D-GlcNAc}-L-asparaginyl-[protein] + UDP-N-acetyl-alpha-D-glucosamine = an N(4)-{beta-D-GlcNAc-(1-&gt;2)-[beta-D-GlcNAc-(1-&gt;4)]-alpha-D-Man-(1-&gt;3)-[alpha-D-Man-(1-&gt;6)]-beta-D-Man-(1-&gt;4)-beta-D-GlcNAc-(1-&gt;4)-beta-D-GlcNAc}-L-asparaginyl-[protein] + UDP + H(+). The catalysed reaction is an N(4)-{beta-D-GlcNAc-(1-&gt;2)-alpha-D-Man-(1-&gt;3)-[beta-D-GlcNAc-(1-&gt;2)-[beta-D-GlcNAc-(1-&gt;6)]-alpha-D-Man-(1-&gt;6)]-beta-D-Man-(1-&gt;4)-beta-D-GlcNAc-(1-&gt;4)-beta-D-GlcNAc}-L-asparaginyl-[protein] + UDP-N-acetyl-alpha-D-glucosamine = an N(4)-{beta-D-GlcNAc-(1-&gt;2)-[beta-D-GlcNAc-(1-&gt;4)]-alpha-D-Man-(1-&gt;3)-[beta-D-GlcNAc-(1-&gt;2)-[beta-D-GlcNAc-(1-&gt;6)]-alpha-D-Man-(1-&gt;6)]-beta-D-Man-(1-&gt;4)-beta-D-GlcNAc-(1-&gt;4)-beta-D-GlcNAc}-L-asparaginyl-[protein] + UDP + H(+). It carries out the reaction an N(4)-{beta-D-GlcNAc-(1-&gt;2)-alpha-D-Man-(1-&gt;3)-[beta-D-GlcNAc-(1-&gt;2)-alpha-D-Man-(1-&gt;6)]-beta-D-Man-(1-&gt;4)-beta-D-GlcNAc-(1-&gt;4)-[alpha-L-Fuc-(1-&gt;6)]-beta-D-GlcNAc}-L-asparaginyl-[protein] + UDP-N-acetyl-alpha-D-glucosamine = N(4)-{beta-D-GlcNAc-(1-&gt;2)-[beta-D-GlcNAc-(1-&gt;4)]-alpha-D-Man-(1-&gt;3)-[beta-D-GlcNAc-(1-&gt;2)-alpha-D-Man-(1-&gt;6)]-beta-D-Man-(1-&gt;4)-beta-D-GlcNAc-(1-&gt;4)-[alpha-L-Fuc-(1-&gt;6)]-beta-D-GlcNAc}-asparaginyl-[protein] + UDP + H(+). It catalyses the reaction an N(4)-{beta-D-GlcNAc-(1-&gt;2)-alpha-D-Man-(1-&gt;3)-[beta-D-Gal-(1-&gt;4)-beta-D-GlcNAc-(1-&gt;2)-alpha-D-Man-(1-&gt;6)]-beta-D-Man-(1-&gt;4)-beta-D-GlcNAc-(1-&gt;4)-beta-D-GlcNAc}-L-asparaginyl-[protein] + UDP-N-acetyl-alpha-D-glucosamine = an N(4)-{beta-D-GlcNAc-(1-&gt;2)-[beta-D-GlcNAc-(1-&gt;4)]-alpha-D-Man-(1-&gt;3)-[beta-D-Gal-(1-&gt;4)-beta-D-GlcNAc-(1-&gt;2)-alpha-D-Man-(1-&gt;6)]-beta-D-Man-(1-&gt;4)-beta-D-GlcNAc-(1-&gt;4)-beta-D-GlcNAc}-L-asparaginyl-[protein] + UDP + H(+). The enzyme catalyses N(4)-{beta-D-GlcNAc-(1-&gt;2)-alpha-D-Man-(1-&gt;3)-[alpha-D-Man-(1-&gt;3)-{alpha-D-Man-(1-&gt;6)}-alpha-D-Man-(1-&gt;6)]-beta-D-Man-(1-&gt;4)-beta-D-GlcNAc-(1-&gt;4)-beta-D-GlcNAc}-asparaginyl-[protein] + UDP-N-acetyl-alpha-D-glucosamine = N(4)-{beta-D-GlcNAc-(1-&gt;2)-[beta-D-GlcNAc-(1-&gt;4)]-alpha-D-Man-(1-&gt;3)-[alpha-D-Man-(1-&gt;3)-{alpha-D-Man-(1-&gt;6)}-alpha-D-Man-(1-&gt;6)]-beta-D-Man-(1-&gt;4)-beta-D-GlcNAc-(1-&gt;4)-beta-D-GlcNAc}-asparaginyl-[protein] + UDP + H(+). The catalysed reaction is N(4)-{beta-D-GlcNAc-(1-&gt;2)-alpha-D-Man-(1-&gt;3)-beta-D-Man-(1-&gt;4)-beta-D-GlcNAc-(1-&gt;4)-beta-D-GlcNAc}-asparaginyl-[protein] + UDP-N-acetyl-alpha-D-glucosamine = N(4)-{beta-D-GlcNAc-(1-&gt;2)-[beta-D-GlcNAc-(1-&gt;4)]-alpha-D-Man-(1-&gt;3)-beta-D-Man-(1-&gt;4)-beta-D-GlcNAc-(1-&gt;4)-beta-D-GlcNAc}-asparaginyl-[protein] + UDP + H(+). The protein operates within protein modification; protein glycosylation. With respect to regulation, inhibited by UDP. Functionally, glycosyltransferase that catalyze the transfer of GlcNAc from UDP-GlcNAc to the GlcNAcbeta1-2Manalpha1-3 arm of the core structure of N-linked glycans through a beta1-4 linkage and participates in the production of tri- and tetra-antennary N-linked sugar chains. Involved in glucose transport by mediating SLC2A2/GLUT2 glycosylation, thereby controlling cell-surface expression of SLC2A2 in pancreatic beta cells. This Bos taurus (Bovine) protein is Alpha-1,3-mannosyl-glycoprotein 4-beta-N-acetylglucosaminyltransferase A.